A 390-amino-acid polypeptide reads, in one-letter code: F-box/kelch-repeat protein At3g06570 (390 aa).

One can recognise an F-box domain in the interval 23 to 69 (SASFQSLPDDLILSIVARVPRLYHRTVSLVCKSFRSLLVSPELYKAR). Kelch repeat units follow at residues 140 to 183 (DIYN…VLDR), 185 to 234 (IFVV…CRTA), and 236 to 281 (IDGK…QIHN).

The protein is F-box/kelch-repeat protein At3g06570 of Arabidopsis thaliana (Mouse-ear cress).